The sequence spans 380 residues: Negative elongation factor E (380 aa).

A coiled-coil region spans residues 7–36 (GLSEEEEALQKKFNKLKKKKKALLALKKQS). The span at 30-43 (LALKKQSSSSTTSQ) shows a compositional bias: low complexity. Residues 30-67 (LALKKQSSSSTTSQGGVKRSLSEQPVMDTATATEQAKQ) form a disordered region. At S51 the chain carries Phosphoserine. K78 is covalently cross-linked (Glycyl lysine isopeptide (Lys-Gly) (interchain with G-Cter in SUMO1); alternate). A Glycyl lysine isopeptide (Lys-Gly) (interchain with G-Cter in SUMO2); alternate cross-link involves residue K78. The tract at residues 79–258 (AETKNSGFKR…SDSFPERRAP (180 aa)) is disordered. K82 is covalently cross-linked (Glycyl lysine isopeptide (Lys-Gly) (interchain with G-Cter in SUMO2)). Residues 90 to 101 (RTLEGKLKDPEK) are compositionally biased toward basic and acidic residues. Phosphoserine occurs at positions 113 and 115. PolyADP-ribosyl glutamic acid is present on E122. A phosphoserine mark is found at S131 and S139. Residue E151 is modified to PolyADP-ribosyl glutamic acid. S165 is modified (phosphoserine). E172 carries the polyADP-ribosyl glutamic acid modification. S179 carries the phosphoserine modification. S181, S185, and S187 each carry phosphoserine; by CDK9. 4 consecutive repeat copies span residues 184 to 185 (RS), 186 to 187 (RS), 188 to 189 (RD), and 190 to 191 (RS). The segment at 184–243 (RSRSRDRSHERNRDRDRDRERDRDRDRDRDRERDRDRDRDRDRDRERDRDRERDRDRDRE) is 30 X 2 AA approximate tandem repeats of R-[DSNE]. Residues 186–256 (RSRDRSHERN…RRSDSFPERR (71 aa)) show a composition bias toward basic and acidic residues. At S191 the chain carries Phosphoserine; by CDK9. The stretch at 192–193 (HE) is one 5; approximate repeat. 25 repeat units span residues 194–195 (RN), 196–197 (RD), 198–199 (RD), 200–201 (RD), 202–203 (RE), 204–205 (RD), 206–207 (RD), 208–209 (RD), 210–211 (RD), 212–213 (RD), 214–215 (RE), 216–217 (RD), 218–219 (RD), 220–221 (RD), 222–223 (RD), 224–225 (RD), 226–227 (RD), 228–229 (RE), 230–231 (RD), 232–233 (RD), 234–235 (RE), 236–237 (RD), 238–239 (RD), 240–241 (RD), and 242–243 (RE). Residues S249 and S251 each carry the phosphoserine modification. One can recognise an RRM domain in the interval 262 to 332 (NTLYVYGEDM…VQLKVNIARK (71 aa)). A phosphothreonine mark is found at T272 and T274. A phosphoserine mark is found at S281 and S353. E374 carries the polyADP-ribosyl glutamic acid modification.

This sequence belongs to the RRM NELF-E family. The NELF complex is composed of NELFA, NELFB, NELFCD (isoform NELF-C or isoform NELF-D) and NELFE. Interacts with NELFB. As to quaternary structure, (Microbial infection) Binds to the HIV-1 TAR RNA which is located in the long terminal repeat (LTR) of HIV-1. Post-translationally, phosphorylated by the P-TEFb complex at sites next to its RNA recognition motif, promoting its release from chromatin. In terms of processing, sumoylated. Poly-ADP-ribosylated by PARP1, thereby preventing RNA-binding and relieving transcription pausing. Widely expressed. Expressed in heart, brain, lung, placenta, liver, skeletal muscle, kidney and pancreas.

It localises to the nucleus. The protein resides in the chromosome. In terms of biological role, essential component of the NELF complex, a complex that negatively regulates the elongation of transcription by RNA polymerase II. The NELF complex, which acts via an association with the DSIF complex and causes transcriptional pausing, is counteracted by the P-TEFb kinase complex. Provides the strongest RNA binding activity of the NELF complex and may initially recruit the NELF complex to RNA. (Microbial infection) The NELF complex is involved in HIV-1 latency possibly involving recruitment of PCF11 to paused RNA polymerase II. This is Negative elongation factor E (NELFE) from Homo sapiens (Human).